A 70-amino-acid chain; its full sequence is Large ribosomal subunit protein eL38 (70 aa).

Belongs to the eukaryotic ribosomal protein eL38 family.

This is Large ribosomal subunit protein eL38 (RpL38) from Julodis onopordi (Jewel beetle).